Consider the following 116-residue polypeptide: Putative antiporter subunit mnhC2 (116 aa).

3 helical membrane-spanning segments follow: residues 3 to 23, 28 to 48, and 72 to 92; these read LILL…ILSV, IVIG…SMGN, and AIVL…LVLV.

Belongs to the CPA3 antiporters (TC 2.A.63) subunit C family. May form a heterooligomeric complex that consists of seven subunits: mnhA2, mnhB2, mnhC2, mnhD2, mnhE2, mnhF2 and mnhG2.

The protein localises to the cell membrane. This Staphylococcus saprophyticus subsp. saprophyticus (strain ATCC 15305 / DSM 20229 / NCIMB 8711 / NCTC 7292 / S-41) protein is Putative antiporter subunit mnhC2 (mnhC2).